Reading from the N-terminus, the 747-residue chain is Beta-glucosidase BoGH3A (747 aa).

Residues 1–26 (MIIGIMKTFLLTICFLSVQTGMVAIA) form the signal peptide. D273 is an active-site residue.

The protein belongs to the glycosyl hydrolase 3 family.

It is found in the periplasm. It carries out the reaction Hydrolysis of terminal, non-reducing beta-D-glucosyl residues with release of beta-D-glucose.. It participates in glucan metabolism; xyloglucan degradation. In terms of biological role, catalyzes the hydrolysis of terminal, non-reducing beta-D-glucosyl residues with release of beta-D-glucose in xyloglucan degradation, leading to remove the backbone 'G' units. In Bacteroides ovatus (strain ATCC 8483 / DSM 1896 / JCM 5824 / BCRC 10623 / CCUG 4943 / NCTC 11153), this protein is Beta-glucosidase BoGH3A.